Reading from the N-terminus, the 314-residue chain is Olfactory receptor 1E1 (314 aa).

Over 1–25 (MMGQNQTSISDFLLLGLPIQPEQQN) the chain is Extracellular. An N-linked (GlcNAc...) asparagine glycan is attached at N5. The chain crosses the membrane as a helical span at residues 26–49 (LCYALFLAMYLTTLLGNLLIIVLI). Residues 50–57 (RLDSHLHT) lie on the Cytoplasmic side of the membrane. A helical transmembrane segment spans residues 58–79 (PMYLFLSNLSFSDLCFSSVTIP). Over 80–100 (KLLQNMQNQDPSIPYADCLTQ) the chain is Extracellular. Residues 101–120 (MYFFLLFGDLESFLLVAMAY) traverse the membrane as a helical segment. The Cytoplasmic segment spans residues 121–139 (DRYVAICFPLHYTAIMSPM). The chain crosses the membrane as a helical span at residues 140-158 (LCLALVALSWVLTTFHAML). Residues 159 to 195 (HTLLMARLCFCADNVIPHFFCDMSALLKLAFSDTRVN) are Extracellular-facing. The chain crosses the membrane as a helical span at residues 196-219 (EWVIFIMGGLILVIPFLLILGSYA). Residues 220–236 (RIVSSILKVPSSKGICK) lie on the Cytoplasmic side of the membrane. A helical membrane pass occupies residues 237–259 (AFSTCGSHLSVVSLFYGTVIGLY). Topologically, residues 260 to 272 (LCSSANSSTLKDT) are extracellular. The chain crosses the membrane as a helical span at residues 273–292 (VMAMMYTVVTPMLNPFIYSL). Residues 293–314 (RNRDMKGALSRVIHQKKTFFSL) lie on the Cytoplasmic side of the membrane.

Belongs to the G-protein coupled receptor 1 family.

The protein resides in the cell membrane. Its function is as follows. Odorant receptor. The protein is Olfactory receptor 1E1 (OR1E1) of Homo sapiens (Human).